Consider the following 469-residue polypeptide: MALAEADLPNGKTNGKASGSEETPAPVQKVDMNVAINELRVGCKVHVEKDGEDRVAEILSVQMRRGNLEFYVHYVEFNKRLDERIAATRVDLSQGVIWPEPEKPKKPLSGAAKESSKEKKKNPSKKQKLTDSAATTPGANSEDVMDLDNLQVNGTTQDPDNFNRDEEIEKLRTGGSMTQSSHEVARVRNLQRIVLGNHVIEPWYFSPYPIELTEEDEIYICDFTLCYFGSKKQFERFRSKSTLRHPPGNEIYRDEAVSFFEIDGRKQRTWCRNLCLLSKLFLDHKTLYYDVDPFLFYCMTRRDEKGHHLVGYFSKEKESAEGYNVACILTLPQYQRHGYGRLLIDFSYALSKAEGKTGSPEKPLSDLGLLSYRAYWADTIIELLMEKGKQEMTIEDIASVTAMTTTDVLHTLQTYNMLKYYKGQHIICLTDSVCEKYEKMLKKRRRKVNSELLKWKPPVFTAAQLRFAW.

The segment at 1–26 is disordered; sequence MALAEADLPNGKTNGKASGSEETPAP. The span at 11–21 shows a compositional bias: polar residues; sequence GKTNGKASGSE. The Tudor-knot domain occupies 39–92; sequence LRVGCKVHVEKDGEDRVAEILSVQMRRGNLEFYVHYVEFNKRLDERIAATRVDL. The interval 98–163 is disordered; it reads WPEPEKPKKP…GTTQDPDNFN (66 aa). Residues 118 to 127 are compositionally biased toward basic residues; it reads EKKKNPSKKQ. Polar residues-rich tracts occupy residues 130–139 and 150–160; these read TDSAATTPGA and LQVNGTTQDPD. The region spanning 185 to 457 is the MYST-type HAT domain; the sequence is ARVRNLQRIV…VNSELLKWKP (273 aa). The segment at 218 to 243 adopts a C2HC MYST-type; degenerate zinc-finger fold; sequence IYICDFTLCYFGSKKQFERFRSKSTL. Residue lysine 285 is modified to N6-acetyllysine; by autocatalysis. Residues 326–330 and 335–341 contribute to the acetyl-CoA site; these read ACILT and QRHGYGR. The active-site Proton donor/acceptor is the glutamate 361. Serine 365 serves as a coordination point for acetyl-CoA.

It belongs to the MYST (SAS/MOZ) family. As to quaternary structure, component of the NuA4 histone acetyltransferase complex. In terms of processing, autoacetylation at Lys-285 is required for proper function.

The protein localises to the nucleus. It localises to the chromosome. The enzyme catalyses L-lysyl-[histone] + acetyl-CoA = N(6)-acetyl-L-lysyl-[histone] + CoA + H(+). It catalyses the reaction L-lysyl-[protein] + acetyl-CoA = N(6)-acetyl-L-lysyl-[protein] + CoA + H(+). The catalysed reaction is 2-hydroxyisobutanoyl-CoA + L-lysyl-[protein] = N(6)-(2-hydroxyisobutanoyl)-L-lysyl-[protein] + CoA + H(+). It carries out the reaction (2E)-butenoyl-CoA + L-lysyl-[protein] = N(6)-(2E)-butenoyl-L-lysyl-[protein] + CoA + H(+). Its function is as follows. Catalytic component of the NuA4 histone acetyltransferase (HAT) complex which is involved in epigenetic transcriptional activation of selected genes principally by acetylation of nucleosomal histones H4, H3, H2B, H2A and H2A variant H2A.Z. Acetylates histone H4 to form H4K5ac, H4K8ac, H4K12ac and H4K16ac, histone H3 to form H3K14ac, and histone H2A to form H2AK4ac and H2AK7ac. The NuA4 complex is involved in the DNA damage response and is required for chromosome segregation. The NuA4 complex plays a direct role in repair of DNA double-strand breaks (DSBs) through homologous recombination. Recruitment to promoters depends on H3K4me. Also acetylates non-histone proteins. In addition to protein acetyltransferase, can use different acyl-CoA substrates, such as 2-hydroxyisobutanoyl-CoA (2-hydroxyisobutyryl-CoA) or (2E)-butenoyl-CoA (crotonyl-CoA), and is able to mediate protein 2-hydroxyisobutyrylation and crotonylation, respectively. This is Histone acetyltransferase ESA1 (ESA1) from Yarrowia lipolytica (strain CLIB 122 / E 150) (Yeast).